The primary structure comprises 555 residues: Oligo-1,6-glucosidase (555 aa).

The active-site Nucleophile is the Asp199. The active-site Proton donor is Glu255.

This sequence belongs to the glycosyl hydrolase 13 family.

It is found in the cytoplasm. The catalysed reaction is Hydrolysis of (1-&gt;6)-alpha-D-glucosidic linkages in some oligosaccharides produced from starch and glycogen by alpha-amylase, and in isomaltose.. In Heyndrickxia coagulans (Weizmannia coagulans), this protein is Oligo-1,6-glucosidase (malL).